A 506-amino-acid chain; its full sequence is Maturase K (506 aa).

Belongs to the intron maturase 2 family. MatK subfamily.

The protein localises to the plastid. Its subcellular location is the chloroplast. Functionally, usually encoded in the trnK tRNA gene intron. Probably assists in splicing its own and other chloroplast group II introns. This Lathyrus aphaca (Yellow vetchling) protein is Maturase K.